A 118-amino-acid chain; its full sequence is UPF0449 protein C19orf25 homolog (118 aa).

Tyr-63 is subject to Phosphotyrosine. Positions 69 to 105 (YVAMNQRLQQAGAQLEQKRADLQQAGEELERDISQVG) form a coiled coil.

The protein belongs to the UPF0449 family.

This Bos taurus (Bovine) protein is UPF0449 protein C19orf25 homolog.